Here is a 689-residue protein sequence, read N- to C-terminus: Elongation factor G (689 aa).

A tr-type G domain is found at 8 to 282; it reads ENTRNLGIMA…AVVDYLPSPL (275 aa). GTP is bound by residues 17–24, 81–85, and 135–138; these read AHIDAGKT, DTPGH, and NKMD.

It belongs to the TRAFAC class translation factor GTPase superfamily. Classic translation factor GTPase family. EF-G/EF-2 subfamily.

Its subcellular location is the cytoplasm. Its function is as follows. Catalyzes the GTP-dependent ribosomal translocation step during translation elongation. During this step, the ribosome changes from the pre-translocational (PRE) to the post-translocational (POST) state as the newly formed A-site-bound peptidyl-tRNA and P-site-bound deacylated tRNA move to the P and E sites, respectively. Catalyzes the coordinated movement of the two tRNA molecules, the mRNA and conformational changes in the ribosome. This chain is Elongation factor G, found in Mesoplasma florum (strain ATCC 33453 / NBRC 100688 / NCTC 11704 / L1) (Acholeplasma florum).